The primary structure comprises 424 residues: Endoglucanase 1 (424 aa).

An N-terminal signal peptide occupies residues 1–18 (MAKFSALCSLALLGLATA). Cystine bridges form between C35–C41, C68–C90, C80–C86, C156–C384, C188–C211, C192–C210, C231–C250, C239–C244, and C255–C331. N76 carries N-linked (GlcNAc...) asparagine glycosylation. Residue E213 is the Nucleophile of the active site. Residue E218 is the Proton donor of the active site. N271 and N385 each carry an N-linked (GlcNAc...) asparagine glycan.

It belongs to the glycosyl hydrolase 7 (cellulase C) family. As to quaternary structure, monomer.

Its subcellular location is the secreted. The catalysed reaction is Endohydrolysis of (1-&gt;4)-beta-D-glucosidic linkages in cellulose, lichenin and cereal beta-D-glucans.. In terms of biological role, endoglucanase that is involved in the biological conversion of cellulose to glucose. Hydrolyzes internal beta-1,4-glucosidic bonds. In Pyricularia oryzae (strain 70-15 / ATCC MYA-4617 / FGSC 8958) (Rice blast fungus), this protein is Endoglucanase 1.